A 725-amino-acid chain; its full sequence is Ribosomal RNA large subunit methyltransferase K/L (725 aa).

The region spanning 46-157 is the THUMP domain; the sequence is VGYRLCLWSR…KGQAVLSLDL (112 aa).

Belongs to the methyltransferase superfamily. RlmKL family.

It is found in the cytoplasm. The enzyme catalyses guanosine(2445) in 23S rRNA + S-adenosyl-L-methionine = N(2)-methylguanosine(2445) in 23S rRNA + S-adenosyl-L-homocysteine + H(+). It catalyses the reaction guanosine(2069) in 23S rRNA + S-adenosyl-L-methionine = N(2)-methylguanosine(2069) in 23S rRNA + S-adenosyl-L-homocysteine + H(+). In terms of biological role, specifically methylates the guanine in position 2445 (m2G2445) and the guanine in position 2069 (m7G2069) of 23S rRNA. This is Ribosomal RNA large subunit methyltransferase K/L from Stutzerimonas stutzeri (strain A1501) (Pseudomonas stutzeri).